Consider the following 418-residue polypeptide: Serine protease inhibitor A3M (418 aa).

The first 20 residues, 1–20 (MAFIAALGILMAGICPTVLC), serve as a signal peptide directing secretion. N-linked (GlcNAc...) asparagine glycosylation is found at Asn104, Asn184, and Asn269. Residues 367–392 (GTEAAAATGFIFGFRSRRLQTMTVQF) are RCL.

The protein belongs to the serpin family. As to expression, expressed in liver and testis.

It is found in the secreted. This is Serine protease inhibitor A3M (Serpina3m) from Mus musculus (Mouse).